The chain runs to 416 residues: Cysteate synthase (416 aa).

At lysine 104 the chain carries N6-(pyridoxal phosphate)lysine. Pyridoxal 5'-phosphate is bound at residue asparagine 130.

It belongs to the threonine synthase family. Cysteate synthase subfamily. As to quaternary structure, homotrimer. Pyridoxal 5'-phosphate is required as a cofactor.

It catalyses the reaction O-phospho-L-serine + sulfite + H(+) = L-cysteate + phosphate. It participates in cofactor biosynthesis; coenzyme M biosynthesis. In terms of biological role, specifically catalyzes the beta-elimination of phosphate from L-phosphoserine and the beta-addition of sulfite to the dehydroalanine intermediate to produce L-cysteate. The protein is Cysteate synthase of Methanosarcina barkeri (strain Fusaro / DSM 804).